Consider the following 262-residue polypeptide: MLLGVNIDHIAVLRQARMVNDPDLLEAAFIAAKHGDQITLHVREDRRHAQDFDLENIIKFCKSPINLECALNDEILNLALKLKPHRVTLVPEKREELTTEGGLCLNHAKLKQSIEKLQNANIEVSLFINPSLEDIEKSKILKAQFIELHTGHYANLHNALFSNISHTAFALKELGQDKKTLQTQFEKELQNLELCAKKGTELGLKVAAGHGLNYKNVKLIVKIKEICELNIGQSIVARSVFTGLKNAILEMKELIKDEKTSH.

N6 contributes to the 3-amino-2-oxopropyl phosphate binding site. D8–H9 is a binding site for 1-deoxy-D-xylulose 5-phosphate. R17 lines the 3-amino-2-oxopropyl phosphate pocket. The active-site Proton acceptor is H41. Residues R43 and H48 each contribute to the 1-deoxy-D-xylulose 5-phosphate site. Residue E68 is the Proton acceptor of the active site. 1-deoxy-D-xylulose 5-phosphate is bound at residue T98. H210 acts as the Proton donor in catalysis. 3-amino-2-oxopropyl phosphate is bound by residues G211 and G232 to Q233.

Belongs to the PNP synthase family. Homooctamer; tetramer of dimers.

The protein localises to the cytoplasm. It catalyses the reaction 3-amino-2-oxopropyl phosphate + 1-deoxy-D-xylulose 5-phosphate = pyridoxine 5'-phosphate + phosphate + 2 H2O + H(+). It functions in the pathway cofactor biosynthesis; pyridoxine 5'-phosphate biosynthesis; pyridoxine 5'-phosphate from D-erythrose 4-phosphate: step 5/5. Catalyzes the complicated ring closure reaction between the two acyclic compounds 1-deoxy-D-xylulose-5-phosphate (DXP) and 3-amino-2-oxopropyl phosphate (1-amino-acetone-3-phosphate or AAP) to form pyridoxine 5'-phosphate (PNP) and inorganic phosphate. This Campylobacter jejuni subsp. jejuni serotype O:23/36 (strain 81-176) protein is Pyridoxine 5'-phosphate synthase.